The sequence spans 201 residues: MPSLYLASASPRRRELLTQIGVPLSVLVTAIDESPLPNEAPAAYVERLARGKAAAGLAMLEGRGEDGCVLGADTSVVIDGRILGKPVDQADGLAMLAALSGREHQVLTAVALAAAGGVEARVVECRVRFRQVAPEEALRYWQSGEPADKAGGYAIQGLGAIFVSRIEGSYSAVVGLPLCETAELLREFGIPCWQPVGGNPP.

The active-site Proton acceptor is aspartate 73.

Belongs to the Maf family. YhdE subfamily. Requires a divalent metal cation as cofactor.

The protein localises to the cytoplasm. It carries out the reaction dTTP + H2O = dTMP + diphosphate + H(+). It catalyses the reaction UTP + H2O = UMP + diphosphate + H(+). Nucleoside triphosphate pyrophosphatase that hydrolyzes dTTP and UTP. May have a dual role in cell division arrest and in preventing the incorporation of modified nucleotides into cellular nucleic acids. In Pseudomonas aeruginosa (strain ATCC 15692 / DSM 22644 / CIP 104116 / JCM 14847 / LMG 12228 / 1C / PRS 101 / PAO1), this protein is dTTP/UTP pyrophosphatase.